The chain runs to 722 residues: Host cell factor 2 (722 aa).

Kelch repeat units lie at residues 34-79, 83-130, 207-255, and 257-303; these read LMII…GFVC, RILV…RLGH, KMYV…VIGN, and MYIF…VSDS. Fibronectin type-III domains are found at residues 359–460, 514–604, and 606–716; these read APSQ…VDSS, TPSN…TCTP, and FPGA…DQEK. The disordered stretch occupies residues 398–476; the sequence is ATSSDSSAAP…LAPNTSNNSS (79 aa). The segment covering 419 to 436 has biased composition (polar residues); that stretch reads QGSNSTLHNSVSDTVNST.

As to quaternary structure, binds KMT2A/MLL1. Component of the MLL1/MLL complex, at least composed of KMT2A/MLL1, ASH2L, RBBP5, DPY30, WDR5, MEN1, HCFC1 and HCFC2. Interacts with TASOR. Expressed in the spermatogonia, spermatocytes and ovary.

Its subcellular location is the cytoplasm. It is found in the nucleus. This Mus musculus (Mouse) protein is Host cell factor 2 (Hcfc2).